A 501-amino-acid polypeptide reads, in one-letter code: ATP synthase subunit alpha (501 aa).

ATP is bound at residue 169–176 (GDRQTGKT).

It belongs to the ATPase alpha/beta chains family. In terms of assembly, F-type ATPases have 2 components, CF(1) - the catalytic core - and CF(0) - the membrane proton channel. CF(1) has five subunits: alpha(3), beta(3), gamma(1), delta(1), epsilon(1). CF(0) has three main subunits: a(1), b(2) and c(9-12). The alpha and beta chains form an alternating ring which encloses part of the gamma chain. CF(1) is attached to CF(0) by a central stalk formed by the gamma and epsilon chains, while a peripheral stalk is formed by the delta and b chains.

The protein resides in the cell membrane. The enzyme catalyses ATP + H2O + 4 H(+)(in) = ADP + phosphate + 5 H(+)(out). Functionally, produces ATP from ADP in the presence of a proton gradient across the membrane. The alpha chain is a regulatory subunit. The polypeptide is ATP synthase subunit alpha (Streptococcus pneumoniae (strain 70585)).